A 311-amino-acid polypeptide reads, in one-letter code: Cell division protein ZipA (311 aa).

Over 1-5 (MQELR) the chain is Periplasmic. The helical transmembrane segment at 6–26 (FVLIVVGALAIMALLFHGLWT) threads the bilayer. Residues 27–311 (SKKEGKAKFG…QIVEFKAANA (285 aa)) are Cytoplasmic-facing. Over residues 32 to 54 (KAKFGDKPLSKLDLGESEPKESE) the composition is skewed to basic and acidic residues. Residues 32 to 60 (KAKFGDKPLSKLDLGESEPKESEMYVAPE) form a disordered region.

The protein belongs to the ZipA family. Interacts with FtsZ via their C-terminal domains.

It is found in the cell inner membrane. Essential cell division protein that stabilizes the FtsZ protofilaments by cross-linking them and that serves as a cytoplasmic membrane anchor for the Z ring. Also required for the recruitment to the septal ring of downstream cell division proteins. This is Cell division protein ZipA from Vibrio vulnificus (strain CMCP6).